A 268-amino-acid chain; its full sequence is Exopolysaccharide production negative regulator (268 aa).

The N-terminal stretch at 1–22 is a signal peptide; sequence MRAGELKSLRVAVLGMSLAVGA.

Negatively modulates exopolysaccharide (EPS) biosynthesis. The sequence is that of Exopolysaccharide production negative regulator (exoR) from Rhizobium meliloti (strain 1021) (Ensifer meliloti).